The sequence spans 639 residues: Tetracycline resistance protein TetW (639 aa).

One can recognise a tr-type G domain in the interval 1 to 243 (MKIINIGILA…VTGLFQPIGE (243 aa)). GTP contacts are provided by residues 10–17 (AHVDAGKT), 74–78 (DTPGH), and 128–131 (NKID).

The protein belongs to the TRAFAC class translation factor GTPase superfamily. Classic translation factor GTPase family. TetM/TetO subfamily.

Functionally, abolishes the inhibitory effect of tetracyclin on protein synthesis by a non-covalent modification of the ribosomes. The chain is Tetracycline resistance protein TetW (tetW) from Butyrivibrio fibrisolvens.